Here is a 404-residue protein sequence, read N- to C-terminus: Druantia protein DruA (404 aa).

Its subcellular location is the cytoplasm. In terms of biological role, component of antiviral defense system Druantia type I, composed of DruA, DruB, DruC, DruD and DruE. Expression of Druantia in E.coli (strain MG1655) confers resistance to phage lambda, SECphi18, SECphi27 and T4. This is Druantia protein DruA from Escherichia coli (strain UMEA 4076-1).